Consider the following 362-residue polypeptide: MESPAVTFTLAYVVFSVCFVFTPNEFHSAGITVQNLLSGWLGSEDVAFVHYHIRRSSATLLAHSLLPMGYFIGMCFAAPEKELYNVHKAADGWKVFVLMAVLLPIATSILAFYWSQKRWSNHPLAKTLAHHALPQSSWRAVASSINTEFRRIDKFATGAPSARVIVTDTWVMKVTTYKVDVAQQQDIHLTVTDSRQHELSPDSNTPVQFITIRVASINPRVKPFDIRLNSTEYGELREKLHAPIRNAANIVIHQTLGDMFLDTFRSLVEANHTYEISSNQELEPCIGCMQTNANIKLVKYCQEANEGECQQCYCRPMWCLTCMGKWFASRQDQQHPETWLSSQVPCPTCRAKFCIVDVCIVR.

Topologically, residues 1–6 are lumenal; sequence MESPAV. Residues 7–27 form a helical membrane-spanning segment; it reads TFTLAYVVFSVCFVFTPNEFH. The Cytoplasmic segment spans residues 28–56; sequence SAGITVQNLLSGWLGSEDVAFVHYHIRRS. The chain crosses the membrane as a helical span at residues 57-77; it reads SATLLAHSLLPMGYFIGMCFA. Over 78 to 94 the chain is Lumenal; sequence APEKELYNVHKAADGWK. The chain crosses the membrane as a helical span at residues 95-115; sequence VFVLMAVLLPIATSILAFYWS. Over 116 to 362 the chain is Cytoplasmic; that stretch reads QKRWSNHPLA…FCIVDVCIVR (247 aa). The segment at 285 to 350 adopts an RING-type; degenerate zinc-finger fold; sequence CIGCMQTNAN…SSQVPCPTCR (66 aa).

This sequence belongs to the TMEM129 family. Integral component of ER-resident dislocation complexes.

It localises to the endoplasmic reticulum membrane. The catalysed reaction is S-ubiquitinyl-[E2 ubiquitin-conjugating enzyme]-L-cysteine + [acceptor protein]-L-lysine = [E2 ubiquitin-conjugating enzyme]-L-cysteine + N(6)-ubiquitinyl-[acceptor protein]-L-lysine.. Its pathway is protein modification; protein ubiquitination. In terms of biological role, E3 ubiquitin-protein ligase involved in ER-associated protein degradation, preferentially associates with the E2 enzyme UBE2J2. The sequence is that of E3 ubiquitin-protein ligase TM129 (tmem129) from Xenopus laevis (African clawed frog).